The sequence spans 64 residues: Toxin BmKIT3 (64 aa).

The LCN-type CS-alpha/beta domain occupies 1–61 (DGYIRGSNGC…TWKSESNTCG (61 aa)). 4 disulfides stabilise this stretch: C10/C60, C14/C35, C21/C42, and C25/C44. C60 is modified (cysteine amide).

Belongs to the long (4 C-C) scorpion toxin superfamily. Sodium channel inhibitor family. Beta subfamily. Expressed by the venom gland.

Its subcellular location is the secreted. In terms of biological role, depressant insect beta-toxins cause a transient contraction paralysis followed by a slow flaccid paralysis. They bind voltage-independently at site-4 of sodium channels (Nav) and shift the voltage of activation toward more negative potentials thereby affecting sodium channel activation and promoting spontaneous and repetitive firing. In Olivierus martensii (Manchurian scorpion), this protein is Toxin BmKIT3.